A 311-amino-acid chain; its full sequence is Aspartate carbamoyltransferase catalytic subunit (311 aa).

Carbamoyl phosphate is bound by residues arginine 55 and threonine 56. Lysine 85 is a binding site for L-aspartate. Carbamoyl phosphate-binding residues include arginine 106, histidine 135, and glutamine 138. Positions 168 and 230 each coordinate L-aspartate. The carbamoyl phosphate site is built by leucine 268 and proline 269.

The protein belongs to the aspartate/ornithine carbamoyltransferase superfamily. ATCase family. Heterododecamer (2C3:3R2) of six catalytic PyrB chains organized as two trimers (C3), and six regulatory PyrI chains organized as three dimers (R2).

It carries out the reaction carbamoyl phosphate + L-aspartate = N-carbamoyl-L-aspartate + phosphate + H(+). Its pathway is pyrimidine metabolism; UMP biosynthesis via de novo pathway; (S)-dihydroorotate from bicarbonate: step 2/3. Functionally, catalyzes the condensation of carbamoyl phosphate and aspartate to form carbamoyl aspartate and inorganic phosphate, the committed step in the de novo pyrimidine nucleotide biosynthesis pathway. This is Aspartate carbamoyltransferase catalytic subunit from Yersinia pseudotuberculosis serotype IB (strain PB1/+).